A 433-amino-acid chain; its full sequence is Phosphomethylpyrimidine synthase 1 (433 aa).

Residues Asn-66, Met-94, Tyr-123, His-162, 184–186 (SRG), 225–228 (DALR), and Glu-264 each bind substrate. His-268 provides a ligand contact to Zn(2+). Substrate is bound at residue Tyr-291. His-332 contacts Zn(2+). Cys-408, Cys-411, and Cys-415 together coordinate [4Fe-4S] cluster.

It belongs to the ThiC family. It depends on [4Fe-4S] cluster as a cofactor.

The enzyme catalyses 5-amino-1-(5-phospho-beta-D-ribosyl)imidazole + S-adenosyl-L-methionine = 4-amino-2-methyl-5-(phosphooxymethyl)pyrimidine + CO + 5'-deoxyadenosine + formate + L-methionine + 3 H(+). It functions in the pathway cofactor biosynthesis; thiamine diphosphate biosynthesis. Its function is as follows. Catalyzes the synthesis of the hydroxymethylpyrimidine phosphate (HMP-P) moiety of thiamine from aminoimidazole ribotide (AIR) in a radical S-adenosyl-L-methionine (SAM)-dependent reaction. The sequence is that of Phosphomethylpyrimidine synthase 1 from Saccharolobus solfataricus (strain ATCC 35092 / DSM 1617 / JCM 11322 / P2) (Sulfolobus solfataricus).